A 33-amino-acid polypeptide reads, in one-letter code: Mu-theraphotoxin-Osp1a (33 aa).

Cystine bridges form between cysteine 2-cysteine 17, cysteine 9-cysteine 22, and cysteine 16-cysteine 29.

It belongs to the neurotoxin 10 (Hwtx-1) family. As to expression, expressed by the venom gland.

The protein resides in the secreted. In terms of biological role, voltage-gated sodium channel Nav1.7/SCN9A inhibitor. The sequence is that of Mu-theraphotoxin-Osp1a from Orphnaecus sp. (strain Sibaliw/Philippines) (Tarantula spider).